Reading from the N-terminus, the 290-residue chain is Ribosomal RNA small subunit methyltransferase A (290 aa).

Positions 27, 29, 54, 75, 100, and 125 each coordinate S-adenosyl-L-methionine.

This sequence belongs to the class I-like SAM-binding methyltransferase superfamily. rRNA adenine N(6)-methyltransferase family. RsmA subfamily.

The protein localises to the cytoplasm. The catalysed reaction is adenosine(1518)/adenosine(1519) in 16S rRNA + 4 S-adenosyl-L-methionine = N(6)-dimethyladenosine(1518)/N(6)-dimethyladenosine(1519) in 16S rRNA + 4 S-adenosyl-L-homocysteine + 4 H(+). Specifically dimethylates two adjacent adenosines (A1518 and A1519) in the loop of a conserved hairpin near the 3'-end of 16S rRNA in the 30S particle. May play a critical role in biogenesis of 30S subunits. In Streptococcus uberis (strain ATCC BAA-854 / 0140J), this protein is Ribosomal RNA small subunit methyltransferase A.